Reading from the N-terminus, the 426-residue chain is Serine--tRNA ligase (426 aa).

233-235 contacts L-serine; the sequence is TAE. 264–266 contributes to the ATP binding site; that stretch reads RSE. E287 contributes to the L-serine binding site. 351–354 is a binding site for ATP; the sequence is EISS. S385 contacts L-serine.

This sequence belongs to the class-II aminoacyl-tRNA synthetase family. Type-1 seryl-tRNA synthetase subfamily. As to quaternary structure, homodimer. The tRNA molecule binds across the dimer.

The protein resides in the cytoplasm. It catalyses the reaction tRNA(Ser) + L-serine + ATP = L-seryl-tRNA(Ser) + AMP + diphosphate + H(+). The catalysed reaction is tRNA(Sec) + L-serine + ATP = L-seryl-tRNA(Sec) + AMP + diphosphate + H(+). It functions in the pathway aminoacyl-tRNA biosynthesis; selenocysteinyl-tRNA(Sec) biosynthesis; L-seryl-tRNA(Sec) from L-serine and tRNA(Sec): step 1/1. Catalyzes the attachment of serine to tRNA(Ser). Is also able to aminoacylate tRNA(Sec) with serine, to form the misacylated tRNA L-seryl-tRNA(Sec), which will be further converted into selenocysteinyl-tRNA(Sec). The polypeptide is Serine--tRNA ligase (Brachyspira hyodysenteriae (strain ATCC 49526 / WA1)).